The following is a 282-amino-acid chain: HTH-type transcriptional activator RhaR (282 aa).

Residues 179 to 277 (DKLITALANS…GMTPSQWRHL (99 aa)) form the HTH araC/xylS-type domain. 2 consecutive DNA-binding regions (H-T-H motif) follow at residues 196-217 (DAFCQQEQCSERVLRQQFRAQT) and 244-267 (ISEISMQCGFEDSNYFSVVFTRET).

Binds DNA as a dimer.

The protein resides in the cytoplasm. Functionally, activates expression of the rhaSR operon in response to L-rhamnose. The polypeptide is HTH-type transcriptional activator RhaR (Salmonella arizonae (strain ATCC BAA-731 / CDC346-86 / RSK2980)).